We begin with the raw amino-acid sequence, 163 residues long: Lipoprotein signal peptidase (163 aa).

A run of 4 helical transmembrane segments spans residues 9-29 (YLAI…SALS), 39-59 (VLPF…SFLA), 67-87 (WFFT…LYKS), and 92-112 (LLCI…LDRV). Residues aspartate 119 and aspartate 137 contribute to the active site. A helical membrane pass occupies residues 130 to 150 (WPAFNIADSAICVGAALIIWG).

This sequence belongs to the peptidase A8 family.

The protein localises to the cell inner membrane. It carries out the reaction Release of signal peptides from bacterial membrane prolipoproteins. Hydrolyzes -Xaa-Yaa-Zaa-|-(S,diacylglyceryl)Cys-, in which Xaa is hydrophobic (preferably Leu), and Yaa (Ala or Ser) and Zaa (Gly or Ala) have small, neutral side chains.. The protein operates within protein modification; lipoprotein biosynthesis (signal peptide cleavage). Functionally, this protein specifically catalyzes the removal of signal peptides from prolipoproteins. The sequence is that of Lipoprotein signal peptidase from Polynucleobacter necessarius subsp. necessarius (strain STIR1).